The primary structure comprises 353 residues: Chorismate synthase (353 aa).

Residues R48 and R54 each contribute to the NADP(+) site. FMN-binding positions include 125-127 (RSS), 238-239 (NA), G278, 293-297 (KPTSS), and R319.

The protein belongs to the chorismate synthase family. Homotetramer. The cofactor is FMNH2.

It catalyses the reaction 5-O-(1-carboxyvinyl)-3-phosphoshikimate = chorismate + phosphate. It participates in metabolic intermediate biosynthesis; chorismate biosynthesis; chorismate from D-erythrose 4-phosphate and phosphoenolpyruvate: step 7/7. In terms of biological role, catalyzes the anti-1,4-elimination of the C-3 phosphate and the C-6 proR hydrogen from 5-enolpyruvylshikimate-3-phosphate (EPSP) to yield chorismate, which is the branch point compound that serves as the starting substrate for the three terminal pathways of aromatic amino acid biosynthesis. This reaction introduces a second double bond into the aromatic ring system. The sequence is that of Chorismate synthase from Buchnera aphidicola subsp. Schizaphis graminum (strain Sg).